Reading from the N-terminus, the 365-residue chain is Chorismate synthase (365 aa).

Arg-46 is a binding site for NADP(+). FMN contacts are provided by residues 123 to 125, 241 to 242, Gly-281, 296 to 300, and Arg-322; these read RSS, NG, and KPTPS.

It belongs to the chorismate synthase family. Homotetramer. The cofactor is FMNH2.

The enzyme catalyses 5-O-(1-carboxyvinyl)-3-phosphoshikimate = chorismate + phosphate. Its pathway is metabolic intermediate biosynthesis; chorismate biosynthesis; chorismate from D-erythrose 4-phosphate and phosphoenolpyruvate: step 7/7. Functionally, catalyzes the anti-1,4-elimination of the C-3 phosphate and the C-6 proR hydrogen from 5-enolpyruvylshikimate-3-phosphate (EPSP) to yield chorismate, which is the branch point compound that serves as the starting substrate for the three terminal pathways of aromatic amino acid biosynthesis. This reaction introduces a second double bond into the aromatic ring system. The protein is Chorismate synthase of Helicobacter pylori (strain ATCC 700392 / 26695) (Campylobacter pylori).